A 172-amino-acid polypeptide reads, in one-letter code: Myosin regulatory light chain (172 aa).

Thr17 carries the phosphothreonine modification. Ser18 bears the Phosphoserine mark. EF-hand domains lie at 27–62 (AQIQ…LGKE), 98–133 (DPEE…MGER), and 134–168 (YSEE…GTKD). Residues Asp40, Asn42, Asp44, and Asp51 each coordinate Ca(2+).

As to quaternary structure, myosin is a hexamer of 2 heavy chains and 4 light chains (two regulatory light chains and two essential light chains). In terms of processing, may be phosphorylated by let-502 or/and pak-1 and dephosphorylated by mel-11 to regulate its activation and myosin II-mediated contraction. In terms of tissue distribution, expressed in the spermathecal and uterine walls. Weak expression in gonadal sheath and intestinal muscle. Not detected in vulval, pharyngeal or body wall muscles.

It localises to the cytoplasm. Its subcellular location is the cytoskeleton. Functionally, regulates myosin II activity and organization during embryo elongation. May be involved in the organization of mlc-5 into bundles. Required maternally for cytokinesis during meiosis and mitosis in the early embryo and for the establishment of embryonic anterior-posterior polarity. This Caenorhabditis elegans protein is Myosin regulatory light chain.